The chain runs to 295 residues: Zinc finger CCCH domain-containing protein 44 (295 aa).

Positions 1–31 are disordered; the sequence is MEAGGGKRAAPEGTNGAAKRARASESSQVGV. C3H1-type zinc fingers lie at residues 32-60 and 98-126; these read GSKL…HNFP and SVKT…HGER. One can recognise a KH domain in the interval 166-230; sequence SATAKISVDA…DQIKHASAMV (65 aa). The segment at 259–286 adopts a C3H1-type 3 zinc-finger fold; it reads NFKTKLCENFNKGSCTFGDRCHFAHGES.

The chain is Zinc finger CCCH domain-containing protein 44 from Oryza sativa subsp. japonica (Rice).